A 390-amino-acid polypeptide reads, in one-letter code: Anhydro-N-acetylmuramic acid kinase (390 aa).

Residue 9-16 coordinates ATP; sequence GTSLDGID.

The protein belongs to the anhydro-N-acetylmuramic acid kinase family.

The catalysed reaction is 1,6-anhydro-N-acetyl-beta-muramate + ATP + H2O = N-acetyl-D-muramate 6-phosphate + ADP + H(+). Its pathway is amino-sugar metabolism; 1,6-anhydro-N-acetylmuramate degradation. The protein operates within cell wall biogenesis; peptidoglycan recycling. Its function is as follows. Catalyzes the specific phosphorylation of 1,6-anhydro-N-acetylmuramic acid (anhMurNAc) with the simultaneous cleavage of the 1,6-anhydro ring, generating MurNAc-6-P. Is required for the utilization of anhMurNAc either imported from the medium or derived from its own cell wall murein, and thus plays a role in cell wall recycling. The polypeptide is Anhydro-N-acetylmuramic acid kinase (Bacillus cereus (strain B4264)).